The primary structure comprises 741 residues: Aspartyl/asparaginyl beta-hydroxylase (741 aa).

Positions 1 to 54 are disordered; the sequence is MAPRKNAKGGGGNSSSSGSGSGSGSGSPSTGSSGSSSSPGARREAKHGGHKNGR. Residues 1–62 lie on the Cytoplasmic side of the membrane; that stretch reads MAPRKNAKGG…GRRGGISGGS (62 aa). Over residues 8–25 the composition is skewed to gly residues; sequence KGGGGNSSSSGSGSGSGS. Ser-15 carries the phosphoserine modification. Residues 26-40 are compositionally biased toward low complexity; that stretch reads GSPSTGSSGSSSSPG. A helical; Signal-anchor for type II membrane protein membrane pass occupies residues 63–83; the sequence is FFTWFMVIALLGVWTSVAVVW. At 84–741 the chain is on the lumenal side; it reads FDLVDYEEVL…PQQRRSLPAI (658 aa). Residues Asp-100, Asp-102, Asp-104, Asp-106, and Asp-111 each coordinate Ca(2+). Disordered regions lie at residues 120–141 and 222–244; these read ERSPSERTFPPEEEAETHAELE and TASQNHPNDMEEMTNEQENSDPS. A compositionally biased stretch (acidic residues) spans 231 to 242; the sequence is MEEMTNEQENSD. TPR repeat units follow at residues 324–357, 365–398, 437–470, 472–504, and 508–540; these read IKAELDAAEKLRKRGKIEEAVNAFEELVRKYPQS, AQCEDDLAEKQRSNEVLRRAIETYQEAADLPDAP, TTLKNDLGVGYLLLGDNDSAKKVYEEVLNVTPND, FAKVHYGFILKAQNKISESIPYLKEGIESGDPG, and GRFYFHLGDAMQRVGNKEAYKWYELGHKRGHFA. Asn-453 is a glycosylation site (N-linked (GlcNAc...) asparagine). Trp-608 contributes to the 2-oxoglutarate binding site. Residues Cys-624 and Cys-631 are joined by a disulfide bond. Residue Ser-651 coordinates 2-oxoglutarate. His-662 contacts Fe cation. 671 to 673 is a 2-oxoglutarate binding site; it reads RMH. Asn-689 carries N-linked (GlcNAc...) asparagine glycosylation. Fe cation is bound at residue His-708. Arg-718 provides a ligand contact to 2-oxoglutarate.

The protein belongs to the aspartyl/asparaginyl beta-hydroxylase family. As to quaternary structure, monomer. Isoform 2 interacts with CASQ2. The cofactor is Fe cation. In terms of tissue distribution, isoform 1 is detected in heart, liver and ovary (at protein level). Detected in heart ventricle. Isoform 1 is widely expressed. Isoform 2 is detected in heart and skeletal muscle.

The protein localises to the endoplasmic reticulum membrane. It localises to the sarcoplasmic reticulum membrane. It catalyses the reaction L-aspartyl-[protein] + 2-oxoglutarate + O2 = 3-hydroxy-L-aspartyl-[protein] + succinate + CO2. Functionally, specifically hydroxylates an Asp or Asn residue in certain epidermal growth factor-like (EGF) domains of a number of proteins. This is Aspartyl/asparaginyl beta-hydroxylase (Asph) from Mus musculus (Mouse).